The sequence spans 348 residues: Fe(3+) ions import ATP-binding protein FbpC (348 aa).

One can recognise an ABC transporter domain in the interval 7 to 237 (VELRNVTKRF…PASRFMASFM (231 aa)). 39 to 46 (GPSGCGKT) serves as a coordination point for ATP.

Belongs to the ABC transporter superfamily. Fe(3+) ion importer (TC 3.A.1.10) family. As to quaternary structure, the complex is composed of two ATP-binding proteins (FbpC), two transmembrane proteins (FbpB) and a solute-binding protein (FbpA).

Its subcellular location is the cell inner membrane. The enzyme catalyses Fe(3+)(out) + ATP + H2O = Fe(3+)(in) + ADP + phosphate + H(+). Part of the ABC transporter complex FbpABC involved in Fe(3+) ions import. Responsible for energy coupling to the transport system. In Escherichia coli O157:H7, this protein is Fe(3+) ions import ATP-binding protein FbpC.